The sequence spans 347 residues: Phosphoribosylformylglycinamidine cyclo-ligase (347 aa).

It belongs to the AIR synthase family.

Its subcellular location is the cytoplasm. The enzyme catalyses 2-formamido-N(1)-(5-O-phospho-beta-D-ribosyl)acetamidine + ATP = 5-amino-1-(5-phospho-beta-D-ribosyl)imidazole + ADP + phosphate + H(+). It functions in the pathway purine metabolism; IMP biosynthesis via de novo pathway; 5-amino-1-(5-phospho-D-ribosyl)imidazole from N(2)-formyl-N(1)-(5-phospho-D-ribosyl)glycinamide: step 2/2. This is Phosphoribosylformylglycinamidine cyclo-ligase from Yersinia pestis.